The primary structure comprises 291 residues: MPELPEVETVRRGLADRLVDFQIGQVEVCRERAIASPGGSALFIKMLCGMHVGSWLRRGKYLMASLHHEIAQSSADSEPDPDGGWWGVHLRMTGQFQWHEAISSPCPHTRVRIWNKKNEELRFVDTRSFGQMWWVPPGNAPETIITGLQKLGPEPFSSAFNSSYLSKRLKGSKRPIKSALLDQSIVAGAGNIYTDESLFAARIRPHTPSGQLKKVELERLCNCLTEVLRVSIGAGGTTFSDFRDLEGINGNYGGQAWVYRRGGQACRICSTPIRRESLCGRGTHWCPNCQR.

Residue proline 2 is the Schiff-base intermediate with DNA of the active site. Catalysis depends on glutamate 3, which acts as the Proton donor. Catalysis depends on lysine 60, which acts as the Proton donor; for beta-elimination activity. The DNA site is built by histidine 108 and arginine 127. An FPG-type zinc finger spans residues 257-291 (WVYRRGGQACRICSTPIRRESLCGRGTHWCPNCQR). Arginine 281 acts as the Proton donor; for delta-elimination activity in catalysis.

This sequence belongs to the FPG family. As to quaternary structure, monomer. Requires Zn(2+) as cofactor.

The catalysed reaction is Hydrolysis of DNA containing ring-opened 7-methylguanine residues, releasing 2,6-diamino-4-hydroxy-5-(N-methyl)formamidopyrimidine.. It catalyses the reaction 2'-deoxyribonucleotide-(2'-deoxyribose 5'-phosphate)-2'-deoxyribonucleotide-DNA = a 3'-end 2'-deoxyribonucleotide-(2,3-dehydro-2,3-deoxyribose 5'-phosphate)-DNA + a 5'-end 5'-phospho-2'-deoxyribonucleoside-DNA + H(+). In terms of biological role, involved in base excision repair of DNA damaged by oxidation or by mutagenic agents. Acts as a DNA glycosylase that recognizes and removes damaged bases. Has a preference for oxidized purines, such as 7,8-dihydro-8-oxoguanine (8-oxoG). Has AP (apurinic/apyrimidinic) lyase activity and introduces nicks in the DNA strand. Cleaves the DNA backbone by beta-delta elimination to generate a single-strand break at the site of the removed base with both 3'- and 5'-phosphates. The sequence is that of Formamidopyrimidine-DNA glycosylase from Prochlorococcus marinus (strain MIT 9313).